Consider the following 94-residue polypeptide: Small ribosomal subunit protein uS19 (94 aa).

Belongs to the universal ribosomal protein uS19 family.

Protein S19 forms a complex with S13 that binds strongly to the 16S ribosomal RNA. The sequence is that of Small ribosomal subunit protein uS19 from Pelotomaculum thermopropionicum (strain DSM 13744 / JCM 10971 / SI).